Reading from the N-terminus, the 483-residue chain is Glutarate-semialdehyde dehydrogenase (483 aa).

NADP(+) is bound by residues 156–157, 180–183, and 233–234; these read WN, KPAS, and GS. The Proton acceptor role is filled by E255. An NADP(+)-binding site is contributed by L256. C289 (nucleophile) is an active-site residue. E386 provides a ligand contact to NADP(+).

This sequence belongs to the aldehyde dehydrogenase family.

It catalyses the reaction 5-oxopentanoate + NADP(+) + H2O = glutarate + NADPH + 2 H(+). It participates in amino-acid degradation. Catalyzes the conversion of 5-oxopentanoate (glutarate semialdehyde) to glutarate. Involved in L-lysine degradation. The sequence is that of Glutarate-semialdehyde dehydrogenase from Pseudomonas aeruginosa (strain ATCC 15692 / DSM 22644 / CIP 104116 / JCM 14847 / LMG 12228 / 1C / PRS 101 / PAO1).